A 389-amino-acid polypeptide reads, in one-letter code: Ankyrin repeat domain-containing protein 42 (389 aa).

The segment at 1 to 21 (MPGVANSGPSTSSRETANPCS) is disordered. The span at 7-19 (SGPSTSSRETANP) shows a compositional bias: polar residues. ANK repeat units lie at residues 25 to 60 (VHFGSIHDAVRAGDVKQLSEIVCLHWLLWHGADITH), 64 to 93 (RGWTASHIAAIRGQDACVQALIMNGANLTA), 97 to 126 (RGCTPLHLAATHGHSFTLQIMLRSGVDPSV), 130 to 159 (REWRPVHYAAFHGRLGCLQLLVKWGCSIED), 163 to 192 (NGNLPVHLAAMEGHLHCFKFLVSRMSSATQ), 200 to 232 (NGENVLDLAQRFFKQNILQFIQGAEYEGKDLED), 235 to 265 (TLAFPGHVAAFKGDLGMLKKLVEDGVININE), 269 to 298 (NGSTPMHKAAGQGHIECLQWLIKMGADSNI), and 302 to 332 (AGERPSDVAKRFAHLAAVKLLEELQKYDIDD).

The chain is Ankyrin repeat domain-containing protein 42 (ANKRD42) from Homo sapiens (Human).